Consider the following 196-residue polypeptide: Probable malonic semialdehyde reductase RutE (196 aa).

The protein belongs to the nitroreductase family. HadB/RutE subfamily. FMN serves as cofactor.

It catalyses the reaction 3-hydroxypropanoate + NADP(+) = 3-oxopropanoate + NADPH + H(+). May reduce toxic product malonic semialdehyde to 3-hydroxypropionic acid, which is excreted. The protein is Probable malonic semialdehyde reductase RutE of Escherichia coli (strain SMS-3-5 / SECEC).